The sequence spans 657 residues: Keratinocyte proline-rich protein (657 aa).

Disordered stretches follow at residues 285 to 320 (QGTYGSYTSQRRSQSTSRCLPPRRLQPSYRSCSPPR), 425 to 493 (HPFP…PSPE), and 517 to 568 (QPVP…CGQP). Residues 292 to 302 (TSQRRSQSTSR) show a composition bias toward low complexity. Residues 434-444 (QHLDRSPESSR) are compositionally biased toward basic and acidic residues. S442 bears the Phosphoserine mark. Pro residues-rich tracts occupy residues 449–493 (VPAP…PSPE), 517–530 (QPVPHPAPRPVPRP), and 539–561 (GPRPQPCPLPHPEPMPRPAPCSS).

The protein resides in the cytoplasm. The polypeptide is Keratinocyte proline-rich protein (Mus musculus (Mouse)).